The primary structure comprises 300 residues: 2-oxoglutarate-dependent dioxygenase DAO (300 aa).

One can recognise a Fe2OG dioxygenase domain in the interval 149–252; that stretch reads WPCQFRMNRY…VSIAMFLLAP (104 aa). His173, Asp175, and His232 together coordinate Fe cation. Arg242 contributes to the 2-oxoglutarate binding site.

It belongs to the iron/ascorbate-dependent oxidoreductase family. Fe(2+) is required as a cofactor.

Functionally, 2-oxoglutarate-dependent dioxygenase essential for auxin catabolism and maintenance of auxin homeostasis in reproductive organs. Catalyzes the irreversible oxidation of indole-3-acetic acid (IAA) to the biologically inactive 2-oxoindole-3-acetic acid (OxIAA). This Oryza sativa subsp. indica (Rice) protein is 2-oxoglutarate-dependent dioxygenase DAO (DAO).